A 391-amino-acid polypeptide reads, in one-letter code: MLAAGRGKRAGSLQKNPKQYRLLGQKPVICHTVRCFCQHPAITTIILVIHPEDRQICEQAITDFKEHLIIVEGGNTRQISTLRGLHALKKFKPKYVHIHDGARPFIENKLLEKIHTTVNHQEGVLPVLPVSDTLKRVNSTHRVLETIPHTHLYSAQTPQCFPFERILAAHERAMQTCKKEFTDDSAIAEWFGIPMHTIPGDSHNIKITWHEDFDTAHLYLKKKMQMFPDIRTGNGYDVHSFEEGTSLILCGIKIPFHKKLKGHSDADVAFHALTDALLATQGAGDIGTHFLPSDPQWKNAPSEIFLRHALEIIKQAGGRIANVDITLIAETPKIGPYRHTMTENLMNILSLSLDRISIKATTNEKLGFIGREEGIAALATATVLYPGEIPK.

Positions 1-230 (MLAAGRGKRA…KKKMQMFPDI (230 aa)) are 2-C-methyl-D-erythritol 4-phosphate cytidylyltransferase. Residues 231–391 (RTGNGYDVHS…TVLYPGEIPK (161 aa)) are 2-C-methyl-D-erythritol 2,4-cyclodiphosphate synthase. Residues D237 and H239 each contribute to the a divalent metal cation site. 4-CDP-2-C-methyl-D-erythritol 2-phosphate-binding positions include 237–239 (DVH) and 263–264 (HS). H271 contributes to the a divalent metal cation binding site. 4-CDP-2-C-methyl-D-erythritol 2-phosphate is bound by residues 285 to 287 (DIG), 361 to 364 (TTNE), F368, and R371.

It in the N-terminal section; belongs to the IspD/TarI cytidylyltransferase family. IspD subfamily. In the C-terminal section; belongs to the IspF family. Requires a divalent metal cation as cofactor.

The enzyme catalyses 2-C-methyl-D-erythritol 4-phosphate + CTP + H(+) = 4-CDP-2-C-methyl-D-erythritol + diphosphate. It carries out the reaction 4-CDP-2-C-methyl-D-erythritol 2-phosphate = 2-C-methyl-D-erythritol 2,4-cyclic diphosphate + CMP. It participates in isoprenoid biosynthesis; isopentenyl diphosphate biosynthesis via DXP pathway; isopentenyl diphosphate from 1-deoxy-D-xylulose 5-phosphate: step 2/6. It functions in the pathway isoprenoid biosynthesis; isopentenyl diphosphate biosynthesis via DXP pathway; isopentenyl diphosphate from 1-deoxy-D-xylulose 5-phosphate: step 4/6. In terms of biological role, bifunctional enzyme that catalyzes the formation of 4-diphosphocytidyl-2-C-methyl-D-erythritol from CTP and 2-C-methyl-D-erythritol 4-phosphate (MEP) (IspD), and catalyzes the conversion of 4-diphosphocytidyl-2-C-methyl-D-erythritol 2-phosphate (CDP-ME2P) to 2-C-methyl-D-erythritol 2,4-cyclodiphosphate (ME-CPP) with a corresponding release of cytidine 5-monophosphate (CMP) (IspF). The sequence is that of Bifunctional enzyme IspD/IspF from Bartonella quintana (strain Toulouse) (Rochalimaea quintana).